Here is a 428-residue protein sequence, read N- to C-terminus: Lupus La protein homolog A (428 aa).

Residues 7 to 99 enclose the HTH La-type RNA-binding domain; the sequence is KEQKLDSDTK…RRSPAKPLPE (93 aa). One can recognise an RRM domain in the interval 111-203; that stretch reads KSVYIKGFPT…EERKLNKSEE (93 aa). Disordered stretches follow at residues 187–223 and 323–428; these read EYHAKKNEERKLNKSEEKAKSKQVKKEAQKQAEDAER and QESF…VGDQ. Short sequence motifs (nuclear localization signal) lie at residues 196–212 and 316–332; these read RKLNKSEEKAKSKQVKK and KKILEGKQESFNKRKGR. The xRRM domain occupies 227 to 349; that stretch reads EERVGSLLKF…KGRGGKGNDS (123 aa). Basic residues-rich tracts occupy residues 328-343 and 352-361; these read KRKGRDGRKFKGKGRG and RKRTQFQGKK. Over residues 366–377 the composition is skewed to acidic residues; sequence SSDDEDDMEESE. Residues 406–428 show a composition bias toward basic and acidic residues; it reads RSLDDKAEDGPAVKQSKTEVGDQ.

Phosphorylated.

The protein localises to the nucleus. Its function is as follows. La protein plays a role in the transcription of RNA polymerase III. It is most probably a transcription termination factor. Binds to the 3' termini of virtually all nascent polymerase III transcripts. The polypeptide is Lupus La protein homolog A (ssb-a) (Xenopus laevis (African clawed frog)).